The chain runs to 125 residues: Glycine cleavage system H protein (125 aa).

A Lipoyl-binding domain is found at 21–103 (SVTIGISNQA…YSAGWIVKIK (83 aa)). At K62 the chain carries N6-lipoyllysine.

It belongs to the GcvH family. The glycine cleavage system is composed of four proteins: P, T, L and H. Requires (R)-lipoate as cofactor.

Functionally, the glycine cleavage system catalyzes the degradation of glycine. The H protein shuttles the methylamine group of glycine from the P protein to the T protein. The protein is Glycine cleavage system H protein of Psychromonas ingrahamii (strain DSM 17664 / CCUG 51855 / 37).